The chain runs to 187 residues: HTH-type dhaKLM operon transcriptional activator DhaS (187 aa).

Positions 12–72 constitute an HTH tetR-type domain; sequence IITQKIIAKA…WIFENDFAEL (61 aa). The segment at residues 35–54 is a DNA-binding region (H-T-H motif); the sequence is SVSDIMQTAKIRRQTFYNYF.

Homodimer. Interacts with a homodimer of DhaQ.

Functionally, in complex with DhaQ, upon activation by dihydroxyacetone, activates transcription of the dhaKLM operon. Binds the inverted repeat sequence 5'-GGACACATN(6)ATTTGTCC-3' located upstream of and partially overlapping with the -35 promoter sequence of the dhaKLM operon promoter. This chain is HTH-type dhaKLM operon transcriptional activator DhaS (dhaS), found in Lactococcus lactis subsp. lactis (strain IL1403) (Streptococcus lactis).